Here is a 253-residue protein sequence, read N- to C-terminus: PAXIP1-associated glutamate-rich protein 1A (253 aa).

Disordered stretches follow at residues 1–108 and 126–253; these read MSLA…MPPP and LQAE…QRKY. Over residues 45–66 the composition is skewed to basic and acidic residues; it reads KAEEEGKGSQEEAGREGSRPEE. A sufficient for interaction with NCOA1 region spans residues 115–159; that stretch reads YELLATQGTLELQAEILPRRPPTPEAQSEEERSDEEPEAKEEEEE. T137 is subject to Phosphothreonine. Residues 141–158 are compositionally biased toward acidic residues; that stretch reads QSEEERSDEEPEAKEEEE. 2 positions are modified to phosphoserine: S142 and S147. The segment at 160-253 is sufficient for interaction with ESR1; that stretch reads KPHMPTEFDF…NSLFPRQRKY (94 aa). Basic and acidic residues predominate over residues 194-222; the sequence is QKREARLDKVLSDMKRHKKLEEQILRTGR. Phosphoserine is present on S236. The span at 238–247 shows a compositional bias: polar residues; the sequence is PLRSSGNSLF.

Component of the KMT2 family MLL2/MLL3 complex, at least composed of the histone methyltransferases KMT2D and/or KMT2C, the common subunits ASH2L, RBBP5, WDR5 and DPY30, and the complex type-specific subunits PAXIP1/PTIP, PAGR1, NCOA6 and KDM6A; PAXIP1 is required for the association with the MLL2/MLL3 complex. Forms a constitutive complex with PAXIP1/PTIP independently of the MLL2/MLL3 complex. Interacts with NCOA1, ESR1, NR3C1, AR.

Its subcellular location is the nucleus. Its association with the histone methyltransferase MLL2/MLL3 complex is suggesting a role in epigenetic transcriptional activation. However, in association with PAXIP1/PTIP is proposed to function at least in part independently of the MLL2/MLL3 complex. Proposed to be recruited by PAXIP1 to sites of DNA damage where the PAGR1:PAXIP1 complex is required for cell survival in response to DNA damage independently of the MLL2/MLL3 complex. However, its function in DNA damage has been questioned. During immunoglobulin class switching in activated B-cells is involved in transcription regulation of downstream switch regions at the immunoglobulin heavy-chain (Igh) locus independently of the MLL2/MLL3 complex. Involved in both estrogen receptor-regulated gene transcription and estrogen-stimulated G1/S cell-cycle transition. Acts as a transcriptional cofactor for nuclear hormone receptors. Inhibits the induction properties of several steroid receptors such as NR3C1, AR and PPARG; the mechanism of inhibition appears to be gene-dependent. May be involved in the regulation of the BMP pathway in extraembryonic development. In Mus musculus (Mouse), this protein is PAXIP1-associated glutamate-rich protein 1A.